A 266-amino-acid chain; its full sequence is Hydroxyethylthiazole kinase (266 aa).

A substrate-binding site is contributed by Met43. Positions 119 and 166 each coordinate ATP. Substrate is bound at residue Gly193.

The protein belongs to the Thz kinase family. It depends on Mg(2+) as a cofactor.

The enzyme catalyses 5-(2-hydroxyethyl)-4-methylthiazole + ATP = 4-methyl-5-(2-phosphooxyethyl)-thiazole + ADP + H(+). The protein operates within cofactor biosynthesis; thiamine diphosphate biosynthesis; 4-methyl-5-(2-phosphoethyl)-thiazole from 5-(2-hydroxyethyl)-4-methylthiazole: step 1/1. Functionally, catalyzes the phosphorylation of the hydroxyl group of 4-methyl-5-beta-hydroxyethylthiazole (THZ). This Methanococcus maripaludis (strain C6 / ATCC BAA-1332) protein is Hydroxyethylthiazole kinase.